The primary structure comprises 394 residues: Phosphoglycerate kinase (394 aa).

Residues 21–23 (DLN), R37, 60–63 (HLGR), R115, and R148 each bind substrate. ATP is bound by residues K199, E321, and 347-350 (GGDT).

The protein belongs to the phosphoglycerate kinase family. As to quaternary structure, monomer.

The protein localises to the cytoplasm. It carries out the reaction (2R)-3-phosphoglycerate + ATP = (2R)-3-phospho-glyceroyl phosphate + ADP. It participates in carbohydrate degradation; glycolysis; pyruvate from D-glyceraldehyde 3-phosphate: step 2/5. The protein is Phosphoglycerate kinase of Aromatoleum aromaticum (strain DSM 19018 / LMG 30748 / EbN1) (Azoarcus sp. (strain EbN1)).